Reading from the N-terminus, the 563-residue chain is TSET complex member tstC (563 aa).

Disordered regions lie at residues 146-170, 192-213, 235-298, 376-395, and 428-563; these read SPHQPPHYNTHHHTSTPSVAPSFIT, NSLSNSISNSNSNNNNNNNNDS, VLNS…NYNN, HPNAGKEAKEKEKEKENEFK, and GSAS…FLNF. Over residues 379-395 the composition is skewed to basic and acidic residues; the sequence is AGKEAKEKEKEKENEFK. The segment covering 428–459 has biased composition (low complexity); that stretch reads GSASSKSSPSTSPLSSSYNPSSPETSENSFSA. The span at 460-473 shows a compositional bias: polar residues; sequence TPISDSNSLKNSID. Composition is skewed to low complexity over residues 474 to 487 and 507 to 543; these read NNNNNNNNNNNNNN and NNSKSSLSTSNSNISTPDNGASSPLASSTSGSASSAA. Over residues 552 to 563 the composition is skewed to polar residues; sequence NSAKTKMNFLNF.

As to quaternary structure, component of the TSET complex, a heterohexamer composed of tstA, tstB, tstC, tstD, tstE and tstF, which may act in plasma membrane turnover. tstA, tstB, tstC and tstD are likely to be the core complex members with tstE and tstF acting as associated scaffold proteins.

This chain is TSET complex member tstC, found in Dictyostelium discoideum (Social amoeba).